The following is a 494-amino-acid chain: Alpha-amylase A (494 aa).

The signal sequence occupies residues methionine 1–alanine 18. Glutamine 19 is subject to Pyrrolidone carboxylic acid. A disulfide bond links cysteine 46 and cysteine 102. Positions 116, 165, and 174 each coordinate Ca(2+). An intrachain disulfide couples cysteine 153 to cysteine 167. Residue arginine 202 coordinates chloride. The Nucleophile role is filled by aspartate 204. Histidine 208 is a binding site for Ca(2+). Catalysis depends on glutamate 241, which acts as the Proton donor. Residues asparagine 304 and arginine 343 each contribute to the chloride site. 2 cysteine pairs are disulfide-bonded: cysteine 376/cysteine 382 and cysteine 448/cysteine 460.

The protein belongs to the glycosyl hydrolase 13 family. In terms of assembly, monomer. Requires Ca(2+) as cofactor. The cofactor is chloride.

The catalysed reaction is Endohydrolysis of (1-&gt;4)-alpha-D-glucosidic linkages in polysaccharides containing three or more (1-&gt;4)-alpha-linked D-glucose units.. The sequence is that of Alpha-amylase A (Amy-d) from Drosophila mauritiana (Fruit fly).